The primary structure comprises 305 residues: Pseudouridine-5'-phosphate glycosidase (305 aa).

Glu-22 functions as the Proton donor in the catalytic mechanism. 2 residues coordinate substrate: Lys-84 and Val-104. Residue Asp-136 coordinates Mn(2+). Residue 138-140 (SAD) coordinates substrate. Catalysis depends on Lys-157, which acts as the Nucleophile.

This sequence belongs to the pseudouridine-5'-phosphate glycosidase family. As to quaternary structure, homotrimer. Requires Mn(2+) as cofactor.

It carries out the reaction D-ribose 5-phosphate + uracil = psi-UMP + H2O. In terms of biological role, catalyzes the reversible cleavage of pseudouridine 5'-phosphate (PsiMP) to ribose 5-phosphate and uracil. Functions biologically in the cleavage direction, as part of a pseudouridine degradation pathway. The chain is Pseudouridine-5'-phosphate glycosidase from Chloroflexus aurantiacus (strain ATCC 29364 / DSM 637 / Y-400-fl).